The sequence spans 329 residues: Probable ABC transporter permease protein MG188 (329 aa).

6 helical membrane passes run 30–50 (FLLF…PFFL), 96–116 (LISL…IVFV), 128–148 (VFFL…VYIF), 176–196 (ALWA…VLII), 234–254 (LIFL…LALF), and 283–303 (NLAG…GLVL). An ABC transmembrane type-1 domain is found at 88–303 (LRNSFLYSLI…VLGVCYGLVL (216 aa)).

It belongs to the binding-protein-dependent transport system permease family. MalFG subfamily.

It is found in the cell membrane. Probably part of a binding-protein-dependent transport system. Probably responsible for the translocation of the substrate across the membrane. The sequence is that of Probable ABC transporter permease protein MG188 from Mycoplasma genitalium (strain ATCC 33530 / DSM 19775 / NCTC 10195 / G37) (Mycoplasmoides genitalium).